Consider the following 216-residue polypeptide: Large ribosomal subunit protein uL3 (216 aa).

A disordered region spans residues 134-153 (RATHGNSRSHNVPGSIGMAQ). The residue at position 153 (Q153) is an N5-methylglutamine.

It belongs to the universal ribosomal protein uL3 family. Part of the 50S ribosomal subunit. Forms a cluster with proteins L14 and L19. In terms of processing, methylated by PrmB.

One of the primary rRNA binding proteins, it binds directly near the 3'-end of the 23S rRNA, where it nucleates assembly of the 50S subunit. This Cupriavidus taiwanensis (strain DSM 17343 / BCRC 17206 / CCUG 44338 / CIP 107171 / LMG 19424 / R1) (Ralstonia taiwanensis (strain LMG 19424)) protein is Large ribosomal subunit protein uL3.